Consider the following 183-residue polypeptide: MKNLKVARRYAKALLLIGKEDGQAEVYREELEAFSSLFKANPDLEAAISNPIYEAKGRQALLRSVVEKSGVSAVTASYLLLLFDKGRIGFLDVITSEYKEMADELKGIARASVSAATELSNETIEKIRSGLGRLTGKEVVLTVSQDPALIGGIVTKIGDLVLDGSIRTQLLNLKETLKRSEAV.

This sequence belongs to the ATPase delta chain family. As to quaternary structure, F-type ATPases have 2 components, F(1) - the catalytic core - and F(0) - the membrane proton channel. F(1) has five subunits: alpha(3), beta(3), gamma(1), delta(1), epsilon(1). F(0) has three main subunits: a(1), b(2) and c(10-14). The alpha and beta chains form an alternating ring which encloses part of the gamma chain. F(1) is attached to F(0) by a central stalk formed by the gamma and epsilon chains, while a peripheral stalk is formed by the delta and b chains.

The protein resides in the cell inner membrane. In terms of biological role, f(1)F(0) ATP synthase produces ATP from ADP in the presence of a proton or sodium gradient. F-type ATPases consist of two structural domains, F(1) containing the extramembraneous catalytic core and F(0) containing the membrane proton channel, linked together by a central stalk and a peripheral stalk. During catalysis, ATP synthesis in the catalytic domain of F(1) is coupled via a rotary mechanism of the central stalk subunits to proton translocation. Functionally, this protein is part of the stalk that links CF(0) to CF(1). It either transmits conformational changes from CF(0) to CF(1) or is implicated in proton conduction. This Desulfatibacillum aliphaticivorans protein is ATP synthase subunit delta.